The chain runs to 988 residues: uncharacterized protein (988 aa).

Residues 1 to 17 (MIRLVFLFLLVVLSVEL) form the signal peptide. Positions 111 to 176 (YQNPSTFPST…SKLNQKSSKS (66 aa)) are disordered. The span at 114–140 (PSTFPSTTTASTTTSTTTMPPTYQTTT) shows a compositional bias: low complexity. 4 N-linked (GlcNAc...) asparagine glycosylation sites follow: asparagine 247, asparagine 389, asparagine 529, and asparagine 601. The chain crosses the membrane as a helical span at residues 690-710 (IMIFTIFSVLSALTCLMCMYL). Asparagine 720 carries an N-linked (GlcNAc...) asparagine glycan. 6 helical membrane-spanning segments follow: residues 721–741 (LTAVTFLGLAFLSISAPAFII), 753–773 (LLFPIAISITIAPVFVKTVLI), 784–804 (VLIAFCIVLIQTVISTEWLLL), 832–852 (MILLSCSLIALLSLLSFIFAL), 864–884 (LMISILAILFETALYVSLPLI), and 891–911 (TVMATTILIFAFVALLLSHTG). Positions 966 to 988 (RSEDTLRRNTSLYGTEGYELPTP) are disordered. An N-linked (GlcNAc...) asparagine glycan is attached at asparagine 974.

The protein resides in the membrane. This is an uncharacterized protein from Caenorhabditis elegans.